A 425-amino-acid chain; its full sequence is Serine--tRNA ligase (425 aa).

228–230 (TAE) is a binding site for L-serine. 259 to 261 (RSE) serves as a coordination point for ATP. Glu282 serves as a coordination point for L-serine. 346–349 (EIAS) serves as a coordination point for ATP. Residue Ser382 participates in L-serine binding.

Belongs to the class-II aminoacyl-tRNA synthetase family. Type-1 seryl-tRNA synthetase subfamily. In terms of assembly, homodimer. The tRNA molecule binds across the dimer.

The protein resides in the cytoplasm. The enzyme catalyses tRNA(Ser) + L-serine + ATP = L-seryl-tRNA(Ser) + AMP + diphosphate + H(+). It catalyses the reaction tRNA(Sec) + L-serine + ATP = L-seryl-tRNA(Sec) + AMP + diphosphate + H(+). It functions in the pathway aminoacyl-tRNA biosynthesis; selenocysteinyl-tRNA(Sec) biosynthesis; L-seryl-tRNA(Sec) from L-serine and tRNA(Sec): step 1/1. Its function is as follows. Catalyzes the attachment of serine to tRNA(Ser). Is also able to aminoacylate tRNA(Sec) with serine, to form the misacylated tRNA L-seryl-tRNA(Sec), which will be further converted into selenocysteinyl-tRNA(Sec). The chain is Serine--tRNA ligase from Rickettsia akari (strain Hartford).